The primary structure comprises 312 residues: Olfactory receptor 2L5 (312 aa).

The Extracellular portion of the chain corresponds to 1-24 (MENYNQTSTDFILLGLFPPSKIGL). Asn5 is a glycosylation site (N-linked (GlcNAc...) asparagine). A helical membrane pass occupies residues 25–48 (FLFILFVLIFLMALIGNLSMILLI). Topologically, residues 49 to 56 (FLDTHLHT) are cytoplasmic. The helical transmembrane segment at 57–78 (PMYFLLSQLSLIDLNYISTIVP) threads the bilayer. The Extracellular segment spans residues 79-99 (KMASDFLYGNKSISFIGCGIQ). Cys96 and Cys188 are joined by a disulfide. Residues 100–119 (SFFFMTFAGAEALLLTSMAY) form a helical membrane-spanning segment. Over 120 to 138 (DRYVAICFPLHYPIRMSKR) the chain is Cytoplasmic. Residues 139-157 (MYVLMITGSWMIGSINSCA) form a helical membrane-spanning segment. Residues 158-194 (HTVYAFRIPYCKSRAINHFFCDVPAMLTLACTDTWVY) lie on the Extracellular side of the membrane. The chain crosses the membrane as a helical span at residues 195 to 218 (EYTVFLSSTIFLVFPFTGIACSYG). The Cytoplasmic portion of the chain corresponds to 219-235 (WVLLAVYRMHSAEGRKK). The chain crosses the membrane as a helical span at residues 236 to 258 (AYSTCSTHLTVVTFYYAPFAYTY). Residues 259 to 271 (LCPRSLRSLTEDK) are Extracellular-facing. The chain crosses the membrane as a helical span at residues 272 to 291 (VLAVFYTILTPMLNPIIYSL). Topologically, residues 292–312 (RNKEVMGALTRVIQNIFSVKM) are cytoplasmic.

Belongs to the G-protein coupled receptor 1 family.

The protein resides in the cell membrane. Functionally, odorant receptor. The protein is Olfactory receptor 2L5 (OR2L5) of Homo sapiens (Human).